The primary structure comprises 100 residues: uncharacterized protein (100 aa).

Residues 68–88 (VFLFFFTGSSPSFPAALLGLF) form a helical membrane-spanning segment.

The protein resides in the membrane. This is an uncharacterized protein from Saccharomyces cerevisiae (strain ATCC 204508 / S288c) (Baker's yeast).